Reading from the N-terminus, the 88-residue chain is ATP synthase F(0) complex subunit f, mitochondrial (88 aa).

A2 bears the N-acetylalanine mark. S3 carries the phosphoserine modification. The residue at position 16 (K16) is an N6-acetyllysine. The chain crosses the membrane as a helical span at residues 62-79; sequence MVLAAYVVFSYCISYKEL.

This sequence belongs to the ATPase F chain family. In terms of assembly, component of the ATP synthase complex composed at least of ATP5F1A/subunit alpha, ATP5F1B/subunit beta, ATP5MC1/subunit c (homooctomer), MT-ATP6/subunit a, MT-ATP8/subunit 8, ATP5ME/subunit e, ATP5MF/subunit f, ATP5MG/subunit g, ATP5MK/subunit k, ATP5MJ/subunit j, ATP5F1C/subunit gamma, ATP5F1D/subunit delta, ATP5F1E/subunit epsilon, ATP5PF/subunit F6, ATP5PB/subunit b, ATP5PD/subunit d, ATP5PO/subunit OSCP. ATP synthase complex consists of a soluble F(1) head domain (subunits alpha(3) and beta(3)) - the catalytic core - and a membrane F(0) domain - the membrane proton channel (subunits c, a, 8, e, f, g, k and j). These two domains are linked by a central stalk (subunits gamma, delta, and epsilon) rotating inside the F1 region and a stationary peripheral stalk (subunits F6, b, d, and OSCP).

Its subcellular location is the mitochondrion. It localises to the mitochondrion inner membrane. Functionally, subunit f, of the mitochondrial membrane ATP synthase complex (F(1)F(0) ATP synthase or Complex V) that produces ATP from ADP in the presence of a proton gradient across the membrane which is generated by electron transport complexes of the respiratory chain. ATP synthase complex consist of a soluble F(1) head domain - the catalytic core - and a membrane F(1) domain - the membrane proton channel. These two domains are linked by a central stalk rotating inside the F(1) region and a stationary peripheral stalk. During catalysis, ATP synthesis in the catalytic domain of F(1) is coupled via a rotary mechanism of the central stalk subunits to proton translocation. In vivo, can only synthesize ATP although its ATP hydrolase activity can be activated artificially in vitro. Part of the complex F(0) domain. This Rattus norvegicus (Rat) protein is ATP synthase F(0) complex subunit f, mitochondrial.